The sequence spans 47 residues: Large ribosomal subunit protein bL36B (47 aa).

Belongs to the bacterial ribosomal protein bL36 family.

The protein is Large ribosomal subunit protein bL36B of Pectobacterium atrosepticum (strain SCRI 1043 / ATCC BAA-672) (Erwinia carotovora subsp. atroseptica).